Here is a 299-residue protein sequence, read N- to C-terminus: UPF0276 protein ABO_1518 (299 aa).

This sequence belongs to the UPF0276 family.

In Alcanivorax borkumensis (strain ATCC 700651 / DSM 11573 / NCIMB 13689 / SK2), this protein is UPF0276 protein ABO_1518.